A 200-amino-acid polypeptide reads, in one-letter code: LHFPL tetraspan subfamily member 7 protein (200 aa).

4 helical membrane passes run 5 to 27, 68 to 88, 113 to 133, and 150 to 170; these read VWVALGLSLTCTSAFSLISPAWF, VSAVMLLGGWLLLAFNAIFLL, AATAMIVGLLIFPIGLASPFI, and LGWGYMTAILNAVLASLLPII.

It belongs to the TMEM211 family.

Its subcellular location is the membrane. The chain is LHFPL tetraspan subfamily member 7 protein from Homo sapiens (Human).